A 504-amino-acid polypeptide reads, in one-letter code: Signal recognition particle receptor FtsY (504 aa).

Disordered stretches follow at residues M1 to L71 and E116 to T135. GTP is bound by residues G308–T315, D391–R395, and T455–D458.

The protein belongs to the GTP-binding SRP family. FtsY subfamily. As to quaternary structure, part of the signal recognition particle protein translocation system, which is composed of SRP and FtsY.

Its subcellular location is the cell inner membrane. It is found in the cytoplasm. The catalysed reaction is GTP + H2O = GDP + phosphate + H(+). Its function is as follows. Involved in targeting and insertion of nascent membrane proteins into the cytoplasmic membrane. Acts as a receptor for the complex formed by the signal recognition particle (SRP) and the ribosome-nascent chain (RNC). The chain is Signal recognition particle receptor FtsY from Synechocystis sp. (strain ATCC 27184 / PCC 6803 / Kazusa).